The chain runs to 349 residues: Dipeptide transport ATP-binding protein DppD (349 aa).

The 252-residue stretch at 7 to 258 (LEVKNLHVNF…PQHPYTWGLL (252 aa)) folds into the ABC transporter domain. 43–50 (GESGSGKS) provides a ligand contact to ATP.

This sequence belongs to the ABC transporter superfamily. The complex is composed of two ATP-binding proteins (DppD and DppF), two transmembrane proteins (DppB and DppC) and a solute-binding protein (DppA).

The protein resides in the cell membrane. The catalysed reaction is a dipeptide(out) + ATP + H2O = a dipeptide(in) + ADP + phosphate + H(+). Part of the ABC transporter DppABCDF involved in dipeptide transport. Responsible for energy coupling to the transport system. This chain is Dipeptide transport ATP-binding protein DppD, found in Lactococcus lactis subsp. cremoris (strain MG1363).